Consider the following 396-residue polypeptide: 8-amino-7-oxononanoate synthase (396 aa).

Substrate is bound at residue R21. A pyridoxal 5'-phosphate-binding site is contributed by 108–109; sequence GY. H133 provides a ligand contact to substrate. Positions 179, 207, and 236 each coordinate pyridoxal 5'-phosphate. N6-(pyridoxal phosphate)lysine is present on K239. T353 contacts substrate.

The protein belongs to the class-II pyridoxal-phosphate-dependent aminotransferase family. BioF subfamily. As to quaternary structure, homodimer. Requires pyridoxal 5'-phosphate as cofactor.

It catalyses the reaction 6-carboxyhexanoyl-[ACP] + L-alanine + H(+) = (8S)-8-amino-7-oxononanoate + holo-[ACP] + CO2. It functions in the pathway cofactor biosynthesis; biotin biosynthesis. Its function is as follows. Catalyzes the decarboxylative condensation of pimeloyl-[acyl-carrier protein] and L-alanine to produce 8-amino-7-oxononanoate (AON), [acyl-carrier protein], and carbon dioxide. The sequence is that of 8-amino-7-oxononanoate synthase from Hahella chejuensis (strain KCTC 2396).